The following is a 715-amino-acid chain: Fatty acid oxidation complex subunit alpha (715 aa).

The segment at 1–190 is enoyl-CoA hydratase; that stretch reads MTTTSAFMLN…KAGLVDDVVP (190 aa). Residues 306–715 are 3-hydroxyacyl-CoA dehydrogenase; the sequence is GPLNSVGILG…WTNGETDQGN (410 aa).

The protein in the N-terminal section; belongs to the enoyl-CoA hydratase/isomerase family. It in the central section; belongs to the 3-hydroxyacyl-CoA dehydrogenase family. Heterotetramer of two alpha chains (FadJ) and two beta chains (FadI).

It localises to the cytoplasm. The catalysed reaction is a (3S)-3-hydroxyacyl-CoA = a (2E)-enoyl-CoA + H2O. It catalyses the reaction a 4-saturated-(3S)-3-hydroxyacyl-CoA = a (3E)-enoyl-CoA + H2O. It carries out the reaction a (3S)-3-hydroxyacyl-CoA + NAD(+) = a 3-oxoacyl-CoA + NADH + H(+). The enzyme catalyses (3S)-3-hydroxybutanoyl-CoA = (3R)-3-hydroxybutanoyl-CoA. It functions in the pathway lipid metabolism; fatty acid beta-oxidation. Catalyzes the formation of a hydroxyacyl-CoA by addition of water on enoyl-CoA. Also exhibits 3-hydroxyacyl-CoA epimerase and 3-hydroxyacyl-CoA dehydrogenase activities. The sequence is that of Fatty acid oxidation complex subunit alpha from Salmonella newport (strain SL254).